We begin with the raw amino-acid sequence, 372 residues long: Cobalt-precorrin-5B C(1)-methyltransferase (372 aa).

This sequence belongs to the CbiD family.

It carries out the reaction Co-precorrin-5B + S-adenosyl-L-methionine = Co-precorrin-6A + S-adenosyl-L-homocysteine. Its pathway is cofactor biosynthesis; adenosylcobalamin biosynthesis; cob(II)yrinate a,c-diamide from sirohydrochlorin (anaerobic route): step 6/10. Catalyzes the methylation of C-1 in cobalt-precorrin-5B to form cobalt-precorrin-6A. The sequence is that of Cobalt-precorrin-5B C(1)-methyltransferase from Prochlorococcus marinus (strain MIT 9515).